The following is a 210-amino-acid chain: Large ribosomal subunit protein uL4 (210 aa).

Residues 46–89 (QGTASTLTRSEVRGGGRKPYKQKGTGRARQGSIRTPLRPGGGII) are disordered. The segment covering 60–71 (GGRKPYKQKGTG) has biased composition (basic residues).

The protein belongs to the universal ribosomal protein uL4 family. As to quaternary structure, part of the 50S ribosomal subunit.

In terms of biological role, one of the primary rRNA binding proteins, this protein initially binds near the 5'-end of the 23S rRNA. It is important during the early stages of 50S assembly. It makes multiple contacts with different domains of the 23S rRNA in the assembled 50S subunit and ribosome. Functionally, forms part of the polypeptide exit tunnel. The polypeptide is Large ribosomal subunit protein uL4 (Prochlorococcus marinus (strain MIT 9215)).